Consider the following 461-residue polypeptide: Glycine--tRNA ligase (461 aa).

Arg100 and Glu174 together coordinate substrate. Residues 206–208, 216–221, 290–291, and 334–337 each bind ATP; these read RNE, FRTREF, EL, and GVDR. A substrate-binding site is contributed by 221–225; it reads FEQME. 330 to 334 is a substrate binding site; sequence EPSVG.

Belongs to the class-II aminoacyl-tRNA synthetase family. Homodimer.

The protein localises to the cytoplasm. It catalyses the reaction tRNA(Gly) + glycine + ATP = glycyl-tRNA(Gly) + AMP + diphosphate. In terms of biological role, catalyzes the attachment of glycine to tRNA(Gly). The sequence is that of Glycine--tRNA ligase from Caldanaerobacter subterraneus subsp. tengcongensis (strain DSM 15242 / JCM 11007 / NBRC 100824 / MB4) (Thermoanaerobacter tengcongensis).